The sequence spans 313 residues: Protein FixB (313 aa).

255-283 (LYLAVGISGQIQHMVGANASQTIFAINKD) contacts FAD.

This sequence belongs to the ETF alpha-subunit/FixB family. Heterodimer of FixA and FixB.

Its pathway is amine and polyamine metabolism; carnitine metabolism. In terms of biological role, required for anaerobic carnitine reduction. May bring reductant to CaiA. This Shigella flexneri protein is Protein FixB.